The following is a 659-amino-acid chain: Chaperone protein DnaK (659 aa).

Residue Thr-201 is modified to Phosphothreonine; by autocatalysis. Residues 571-592 (RSALKEDAPTEKIKEASDELSR) are compositionally biased toward basic and acidic residues. The segment at 571 to 659 (RSALKEDAPT…DVEIVDKPND (89 aa)) is disordered. The segment covering 600–613 (AMQSQSASAAANAQ) has biased composition (low complexity).

It belongs to the heat shock protein 70 family.

Acts as a chaperone. This Chlamydia abortus (strain DSM 27085 / S26/3) (Chlamydophila abortus) protein is Chaperone protein DnaK.